The sequence spans 203 residues: MELKQSLSVHLEAEKPLRRYGAVEETAWKAEGLGSQLDIISMAETSMMPEEIELEMAKIQRLREVLVRRESELRFMMDDIQLCKDIMDLKQELQNLVAIPEKEKTKLQKQREDELIQKIHRLVQKRDFLVDDAEVERLREQEEDKEMADFLRIKLKPLDKVTKTSASSRAEKKAEPPPSKPTVAKTGLALIKDCCGTTQCNIM.

The region spanning 3-149 is the bMERB domain; that stretch reads LKQSLSVHLE…EQEEDKEMAD (147 aa). The tract at residues 161 to 184 is disordered; that stretch reads VTKTSASSRAEKKAEPPPSKPTVA.

The polypeptide is bMERB domain-containing protein 1 (Bmerb1) (Mus musculus (Mouse)).